Reading from the N-terminus, the 275-residue chain is MSQIKPSDIDLSTEICGARQLNVLQRHHMAEPQLDWLAEEVPVALVYNGISHVVMMATPKDLEAFALGFSLSEGIITAPQEIYAIDVTPSCNGIEVNIELSSRRFAGLKERRRAMAGRTGCGVCGIEQLDDIFRPIAPLPFTQTFNLNQLDNALAQLKQVQTVGQLTGCTHAAAWINPQGELLGGCEDVGRHVALDKLLGVRAKQPWQQGAVLVSSRASYEMVQKTAMCGAEILFAVSAATTLAVEVAERYNLTLVGFSKPGRATVYTHPNRIQE.

Cysteine 121 functions as the Cysteine persulfide intermediate in the catalytic mechanism. Residue 258–263 (FSKPGR) coordinates Mo-bis(molybdopterin guanine dinucleotide).

It belongs to the FdhD family.

It is found in the cytoplasm. Its function is as follows. Required for formate dehydrogenase (FDH) activity. Acts as a sulfur carrier protein that transfers sulfur from IscS to the molybdenum cofactor prior to its insertion into FDH. In Yersinia enterocolitica serotype O:8 / biotype 1B (strain NCTC 13174 / 8081), this protein is Sulfur carrier protein FdhD.